A 739-amino-acid polypeptide reads, in one-letter code: DNA ligase (739 aa).

Residues 34–38 (DADYD), 83–84 (SL), and Glu117 contribute to the NAD(+) site. The N6-AMP-lysine intermediate role is filled by Lys119. NAD(+)-binding residues include Arg140, Glu175, Lys291, and Lys315. Zn(2+)-binding residues include Cys420, Cys423, Cys438, and Cys444. Residues 660 to 739 (ADDSPVAGKT…DGWLDLIGQA (80 aa)) enclose the BRCT domain.

The protein belongs to the NAD-dependent DNA ligase family. LigA subfamily. Mg(2+) serves as cofactor. Mn(2+) is required as a cofactor.

It catalyses the reaction NAD(+) + (deoxyribonucleotide)n-3'-hydroxyl + 5'-phospho-(deoxyribonucleotide)m = (deoxyribonucleotide)n+m + AMP + beta-nicotinamide D-nucleotide.. Its function is as follows. DNA ligase that catalyzes the formation of phosphodiester linkages between 5'-phosphoryl and 3'-hydroxyl groups in double-stranded DNA using NAD as a coenzyme and as the energy source for the reaction. It is essential for DNA replication and repair of damaged DNA. The chain is DNA ligase from Ruegeria sp. (strain TM1040) (Silicibacter sp.).